Here is a 959-residue protein sequence, read N- to C-terminus: Probable transport protein MmpL4 (959 aa).

Helical transmembrane passes span 25-45 (FAVP…VFIP), 205-225 (VIVI…VILL), 239-259 (VVAL…VNLL), 300-320 (FHVI…LSFA), 333-353 (AVGM…VLTV), 381-401 (WPLP…LALP), 766-786 (WDLV…MLII), 790-810 (FVAA…SFGL), 818-838 (ILGI…LLAV), 872-892 (VVTN…VSDL), and 902-922 (IGLG…PSIA).

This sequence belongs to the resistance-nodulation-cell division (RND) (TC 2.A.6) family. MmpL subfamily.

It is found in the cell membrane. In Mycobacterium leprae (strain TN), this protein is Probable transport protein MmpL4 (mmpL4).